The sequence spans 74 residues: Translation initiation factor IF-1, chloroplastic (74 aa).

The S1-like domain occupies 1–72; the sequence is MEKQNIIEME…TKGRITYRLR (72 aa).

Belongs to the IF-1 family. In terms of assembly, component of the 30S ribosomal translation pre-initiation complex which assembles on the 30S ribosome in the order IF-2 and IF-3, IF-1 and N-formylmethionyl-tRNA(fMet); mRNA recruitment can occur at any time during PIC assembly.

It localises to the plastid. The protein localises to the chloroplast. One of the essential components for the initiation of protein synthesis. Stabilizes the binding of IF-2 and IF-3 on the 30S subunit to which N-formylmethionyl-tRNA(fMet) subsequently binds. Helps modulate mRNA selection, yielding the 30S pre-initiation complex (PIC). Upon addition of the 50S ribosomal subunit IF-1, IF-2 and IF-3 are released leaving the mature 70S translation initiation complex. The protein is Translation initiation factor IF-1, chloroplastic of Chlorokybus atmophyticus (Soil alga).